The primary structure comprises 346 residues: Putative transmembrane protein ORF346 (346 aa).

The next 6 helical transmembrane spans lie at 67-87 (LPII…CIVY), 104-124 (IINP…VGLT), 134-154 (PPYL…SGIY), 156-176 (AIGD…GLFI), 181-201 (IILY…LCLS), and 219-241 (YPFS…LGSY). The tract at residues 294–346 (SEYPHSENGSGGSGGSGSGSGSGGSGSGGNSGSGGSGSGSSGSGGNSGSGNNG) is disordered. Residues 302 to 346 (GSGGSGGSGSGSGSGGSGSGGNSGSGGSGSGSSGSGGNSGSGNNG) show a composition bias toward gly residues.

It is found in the host membrane. In Acidianus bottle-shaped virus (isolate Italy/Pozzuoli) (ABV), this protein is Putative transmembrane protein ORF346.